The sequence spans 278 residues: 4-diphosphocytidyl-2-C-methyl-D-erythritol kinase (278 aa).

The active site involves Lys-9. 89 to 99 (PVASGIGGGSA) lines the ATP pocket. The active site involves Asp-128.

It belongs to the GHMP kinase family. IspE subfamily.

The enzyme catalyses 4-CDP-2-C-methyl-D-erythritol + ATP = 4-CDP-2-C-methyl-D-erythritol 2-phosphate + ADP + H(+). It participates in isoprenoid biosynthesis; isopentenyl diphosphate biosynthesis via DXP pathway; isopentenyl diphosphate from 1-deoxy-D-xylulose 5-phosphate: step 3/6. Catalyzes the phosphorylation of the position 2 hydroxy group of 4-diphosphocytidyl-2C-methyl-D-erythritol. This is 4-diphosphocytidyl-2-C-methyl-D-erythritol kinase from Cereibacter sphaeroides (strain ATCC 17025 / ATH 2.4.3) (Rhodobacter sphaeroides).